Reading from the N-terminus, the 375-residue chain is Muconate cycloisomerase 1 (375 aa).

Lys171 serves as the catalytic Proton acceptor. 3 residues coordinate Mn(2+): Asp200, Glu226, and Asp251. The Proton donor role is filled by Glu329.

The protein belongs to the mandelate racemase/muconate lactonizing enzyme family. In terms of assembly, homooctamer. Mn(2+) is required as a cofactor.

It catalyses the reaction (S)-muconolactone = cis,cis-muconate + H(+). Its pathway is aromatic compound metabolism; beta-ketoadipate pathway; 5-oxo-4,5-dihydro-2-furylacetate from catechol: step 2/3. Functionally, catalyzes a syn cycloisomerization. This Pseudomonas putida (Arthrobacter siderocapsulatus) protein is Muconate cycloisomerase 1 (catB).